Here is a 598-residue protein sequence, read N- to C-terminus: Torsin-1A-interacting protein 1 (598 aa).

Residues Met-1–Asn-351 lie on the Nuclear side of the membrane. Disordered regions lie at residues Val-19–Ser-254 and Gln-267–Ser-314. At Ser-60 the chain carries Phosphoserine. Basic and acidic residues-rich tracts occupy residues Leu-73–Glu-101 and Arg-115–Thr-124. Ser-135, Ser-143, Ser-154, Ser-156, Ser-157, and Ser-187 each carry phosphoserine. Residues Glu-205–Asn-214 are compositionally biased toward polar residues. At Ser-216 the chain carries Phosphoserine. Thr-221 is subject to Phosphothreonine. A phosphoserine mark is found at Ser-227, Ser-230, and Ser-242. Basic and acidic residues predominate over residues Arg-238–Thr-250. Composition is skewed to polar residues over residues Ser-277–Pro-287 and Arg-300–Gly-313. The residue at position 320 (Ser-320) is a Phosphoserine. The tract at residues Leu-322–Gln-341 is disordered. A Glycyl lysine isopeptide (Lys-Gly) (interchain with G-Cter in SUMO2) cross-link involves residue Lys-323. Polar residues predominate over residues Leu-326 to Gln-341. Ser-330 bears the Phosphoserine mark. The chain crosses the membrane as a helical span at residues Trp-352 to Thr-372. Residues Ser-371–Leu-598 form an interaction with TOR1A region. Topologically, residues Pro-373–Leu-598 are perinuclear space. Positions Glu-374–Ser-450 form a coiled coil. Asn-414 carries an N-linked (GlcNAc...) asparagine glycan.

It belongs to the TOR1AIP family. In terms of assembly, interacts with ATP1B4. Interacts with TOR1A (ATP-bound). Interacts with TOR1B, TOR2A and TOR3A.

The protein resides in the nucleus inner membrane. In terms of biological role, required for nuclear membrane integrity. Induces TOR1A and TOR1B ATPase activity and is required for their location on the nuclear membrane. Binds to A- and B-type lamins. Possible role in membrane attachment and assembly of the nuclear lamina. The polypeptide is Torsin-1A-interacting protein 1 (TOR1AIP1) (Pongo abelii (Sumatran orangutan)).